The following is a 350-amino-acid chain: Methylthioribose-1-phosphate isomerase (350 aa).

Substrate is bound by residues 47 to 49 (RGA), Arg89, and Gln196. Asp237 acts as the Proton donor in catalysis. 247–248 (NK) contributes to the substrate binding site.

Belongs to the eIF-2B alpha/beta/delta subunits family. MtnA subfamily.

The catalysed reaction is 5-(methylsulfanyl)-alpha-D-ribose 1-phosphate = 5-(methylsulfanyl)-D-ribulose 1-phosphate. It participates in amino-acid biosynthesis; L-methionine biosynthesis via salvage pathway; L-methionine from S-methyl-5-thio-alpha-D-ribose 1-phosphate: step 1/6. Functionally, catalyzes the interconversion of methylthioribose-1-phosphate (MTR-1-P) into methylthioribulose-1-phosphate (MTRu-1-P). This is Methylthioribose-1-phosphate isomerase from Nitratidesulfovibrio vulgaris (strain DSM 19637 / Miyazaki F) (Desulfovibrio vulgaris).